A 425-amino-acid chain; its full sequence is Histidine--tRNA ligase (425 aa).

It belongs to the class-II aminoacyl-tRNA synthetase family. Homodimer.

Its subcellular location is the cytoplasm. The enzyme catalyses tRNA(His) + L-histidine + ATP = L-histidyl-tRNA(His) + AMP + diphosphate + H(+). The protein is Histidine--tRNA ligase of Tolumonas auensis (strain DSM 9187 / NBRC 110442 / TA 4).